The sequence spans 156 residues: SsrA-binding protein (156 aa).

This sequence belongs to the SmpB family.

It is found in the cytoplasm. Functionally, required for rescue of stalled ribosomes mediated by trans-translation. Binds to transfer-messenger RNA (tmRNA), required for stable association of tmRNA with ribosomes. tmRNA and SmpB together mimic tRNA shape, replacing the anticodon stem-loop with SmpB. tmRNA is encoded by the ssrA gene; the 2 termini fold to resemble tRNA(Ala) and it encodes a 'tag peptide', a short internal open reading frame. During trans-translation Ala-aminoacylated tmRNA acts like a tRNA, entering the A-site of stalled ribosomes, displacing the stalled mRNA. The ribosome then switches to translate the ORF on the tmRNA; the nascent peptide is terminated with the 'tag peptide' encoded by the tmRNA and targeted for degradation. The ribosome is freed to recommence translation, which seems to be the essential function of trans-translation. The chain is SsrA-binding protein from Paracoccus denitrificans (strain Pd 1222).